We begin with the raw amino-acid sequence, 630 residues long: Adenine DNA glycosylase (630 aa).

The span at 54-72 (MRKCREKKEAEREAEREAE) shows a compositional bias: basic and acidic residues. The disordered stretch occupies residues 54–123 (MRKCREKKEA…ALGGDIEDLF (70 aa)). A compositionally biased stretch (acidic residues) spans 73 to 123 (REAEEEEKAEEAEAEADKEEAEEESEEEEEEEEEEAEAEEEALGGDIEDLF). Catalysis depends on E168, which acts as the Proton donor/acceptor. Residues C341, C348, C351, and C357 each contribute to the [4Fe-4S] cluster site. One can recognise a Nudix hydrolase domain in the interval 383–536 (PRHDFCCVCV…RKVPPFRLQH (154 aa)). The Nudix box signature appears at 427–451 (VILNEEADSATRRNAINVYLKEAFR).

Belongs to the Nth/MutY family. The cofactor is [4Fe-4S] cluster.

It localises to the nucleus. The catalysed reaction is Hydrolyzes free adenine bases from 7,8-dihydro-8-oxoguanine:adenine mismatched double-stranded DNA, leaving an apurinic site.. Its function is as follows. Involved in oxidative DNA damage repair. Initiates repair of A*oxoG to C*G by removing the inappropriately paired adenine base from the DNA backbone. Possesses both adenine and 2-OH-A DNA glycosylase activities. The sequence is that of Adenine DNA glycosylase (MYH) from Arabidopsis thaliana (Mouse-ear cress).